The following is a 718-amino-acid chain: uncharacterized protein (718 aa).

Belongs to the asfivirus C717R family.

Its subcellular location is the virion. This is an uncharacterized protein from African swine fever virus (isolate Pig/Kenya/KEN-50/1950) (ASFV).